The following is a 212-amino-acid chain: MSTIELNKRQEHILQIVKENGPITGEHIAEKLNLTRATLRPDLAILTMSGFLEARPRVGYFYTGKTGTQLLADKLKKLQVKDFQSIPVVIHENVSVYDAICTMFLEDVGTLFVVDRDAVLVGVLSRKDLLRASIGQQELTSVPVHIIMTRMPNITVCRREDYVMDIAKHLIEKQIDALPVIKDTDKGFEVIGRVTKTNMTKILVSLSENEIL.

One can recognise an HTH deoR-type domain in the interval 6-70; the sequence is LNKRQEHILQ…FYTGKTGTQL (65 aa). A DNA-binding region (H-T-H motif) is located at residues 23-42; the sequence is ITGEHIAEKLNLTRATLRPD. 2 consecutive CBS domains span residues 83–139 and 148–211; these read FQSI…QQEL and MTRM…ENEI.

Functionally, transcription repressor that binds to the promoter of gapB and pckA genes, preventing their expression. Acts as a regulator for catabolite repression of gluconeogenic genes. This chain is Transcriptional repressor CcpN (ccpN), found in Bacillus subtilis (strain 168).